The primary structure comprises 156 residues: ATP synthase subunit b (156 aa).

Residues 7 to 27 (LFAQLVVFFILAWFTMKFVWP) form a helical membrane-spanning segment.

It belongs to the ATPase B chain family. F-type ATPases have 2 components, F(1) - the catalytic core - and F(0) - the membrane proton channel. F(1) has five subunits: alpha(3), beta(3), gamma(1), delta(1), epsilon(1). F(0) has four main subunits: a(1), b(2) and c(10-14). The alpha and beta chains form an alternating ring which encloses part of the gamma chain. F(1) is attached to F(0) by a central stalk formed by the gamma and epsilon chains, while a peripheral stalk is formed by the delta and b chains.

The protein resides in the cell inner membrane. In terms of biological role, f(1)F(0) ATP synthase produces ATP from ADP in the presence of a proton or sodium gradient. F-type ATPases consist of two structural domains, F(1) containing the extramembraneous catalytic core and F(0) containing the membrane proton channel, linked together by a central stalk and a peripheral stalk. During catalysis, ATP synthesis in the catalytic domain of F(1) is coupled via a rotary mechanism of the central stalk subunits to proton translocation. Functionally, component of the F(0) channel, it forms part of the peripheral stalk, linking F(1) to F(0). The protein is ATP synthase subunit b of Methylibium petroleiphilum (strain ATCC BAA-1232 / LMG 22953 / PM1).